Here is a 472-residue protein sequence, read N- to C-terminus: UDP-glycosyltransferase 708G2 (472 aa).

The active-site Proton acceptor is His-23. His-23 serves as a coordination point for an anthocyanidin. Asp-117 functions as the Charge relay in the catalytic mechanism. Thr-140 provides a ligand contact to UDP-alpha-D-glucose. The segment at 283–284 (SR) is UDP. Positions 346, 348, 363, 366, 367, 368, and 371 each coordinate UDP-alpha-D-glucose. Gly-386 contacts an anthocyanidin. UDP-alpha-D-glucose is bound by residues Asp-387 and Gln-388.

The protein belongs to the UDP-glycosyltransferase family. As to expression, expressed at low levels in leaves, flowers and immature leaves.

It carries out the reaction a 3'-hydro-2'-hydroxy-beta-oxodihydrochalcone + UDP-alpha-D-glucose = a 3'-(beta-D-glucopyranosyl)-2'-hydroxy-beta-oxodihydrochalcone + UDP + H(+). Its function is as follows. UDP-glucose-dependent glucosyltransferase catalyzing the C-glucosylation of 2-hydroxyflavanones (2-hydroxylnaringenin and 2-hydroxypinocembrin) and phloretin. No activity with flavanones, flavones or flavonols. Exhibits C-glucosylation activity toward 2-phenyl-2',4',6'-trihydroxyacetophenone. Can use UDP-xylose as sugar donor, but catalytic efficiency is much lower toward UDP-xylose than toward UDP-glucose. The polypeptide is UDP-glycosyltransferase 708G2 (UGT708G2) (Citrus unshiu (Satsuma mandarin)).